The following is a 340-amino-acid chain: Myomesin-1 (340 aa).

Positions 177–212 (AEKARLKSRPSAPXTGQIIVTEEEPSEEAGTENXQR) are disordered. Over residues 197-206 (TEEEPSEEAG) the composition is skewed to acidic residues.

In terms of assembly, homodimer. Interacts with TTN/titin and PNKD. As to expression, seems to be expressed in all cardiac and skeletal fibers.

Its subcellular location is the cytoplasm. It is found in the myofibril. The protein localises to the sarcomere. It localises to the m line. Functionally, major component of the vertebrate myofibrillar M band. Binds myosin, titin, and light meromyosin. This binding is dose dependent. The protein is Myomesin-1 (MYOM1) of Bos taurus (Bovine).